The chain runs to 654 residues: tRNA 5-methylaminomethyl-2-thiouridine biosynthesis bifunctional protein MnmC (654 aa).

The interval 1–236 (MPTLLQHAQI…KWEVMSGAYV (236 aa)) is tRNA (mnm(5)s(2)U34)-methyltransferase. The interval 262–654 (IGAGLAGSSS…FGLRRLIRGK (393 aa)) is FAD-dependent cmnm(5)s(2)U34 oxidoreductase.

The protein in the N-terminal section; belongs to the methyltransferase superfamily. tRNA (mnm(5)s(2)U34)-methyltransferase family. In the C-terminal section; belongs to the DAO family. The cofactor is FAD.

Its subcellular location is the cytoplasm. It carries out the reaction 5-aminomethyl-2-thiouridine(34) in tRNA + S-adenosyl-L-methionine = 5-methylaminomethyl-2-thiouridine(34) in tRNA + S-adenosyl-L-homocysteine + H(+). Its function is as follows. Catalyzes the last two steps in the biosynthesis of 5-methylaminomethyl-2-thiouridine (mnm(5)s(2)U) at the wobble position (U34) in tRNA. Catalyzes the FAD-dependent demodification of cmnm(5)s(2)U34 to nm(5)s(2)U34, followed by the transfer of a methyl group from S-adenosyl-L-methionine to nm(5)s(2)U34, to form mnm(5)s(2)U34. This is tRNA 5-methylaminomethyl-2-thiouridine biosynthesis bifunctional protein MnmC from Pseudomonas putida (strain ATCC 700007 / DSM 6899 / JCM 31910 / BCRC 17059 / LMG 24140 / F1).